Reading from the N-terminus, the 96-residue chain is (4S)-4-hydroxy-5-phosphonooxypentane-2,3-dione isomerase (96 aa).

An ABM domain is found at 2–91 (HVTLVEINVK…MTGPRKKTVF (90 aa)).

Belongs to the LsrG family. In terms of assembly, homodimer.

It localises to the cytoplasm. The enzyme catalyses (2S)-2-hydroxy-3,4-dioxopentyl phosphate = 3-hydroxy-2,4-dioxopentyl phosphate. In terms of biological role, involved in the degradation of phospho-AI-2, thereby terminating induction of the lsr operon and closing the AI-2 signaling cycle. Catalyzes the conversion of (4S)-4-hydroxy-5-phosphonooxypentane-2,3-dione (P-DPD) to 3-hydroxy-5-phosphonooxypentane-2,4-dione (P-HPD). This chain is (4S)-4-hydroxy-5-phosphonooxypentane-2,3-dione isomerase, found in Yersinia pseudotuberculosis serotype O:1b (strain IP 31758).